We begin with the raw amino-acid sequence, 442 residues long: tRNA modification GTPase MnmE (442 aa).

(6S)-5-formyl-5,6,7,8-tetrahydrofolate is bound by residues Arg-27, Glu-84, and Lys-124. Residues 221 to 366 form the TrmE-type G domain; sequence GLHVVIVGAP…LLTNLQNFAE (146 aa). Residues 231–236, 250–256, and 275–278 contribute to the GTP site; these read NAGKSS, SEEAGTT, and DTAG. Mg(2+) is bound by residues Ser-235 and Thr-256. Lys-442 is a (6S)-5-formyl-5,6,7,8-tetrahydrofolate binding site.

This sequence belongs to the TRAFAC class TrmE-Era-EngA-EngB-Septin-like GTPase superfamily. TrmE GTPase family. Homodimer. Heterotetramer of two MnmE and two MnmG subunits. K(+) is required as a cofactor.

Its subcellular location is the cytoplasm. In terms of biological role, exhibits a very high intrinsic GTPase hydrolysis rate. Involved in the addition of a carboxymethylaminomethyl (cmnm) group at the wobble position (U34) of certain tRNAs, forming tRNA-cmnm(5)s(2)U34. The protein is tRNA modification GTPase MnmE of Brucella anthropi (strain ATCC 49188 / DSM 6882 / CCUG 24695 / JCM 21032 / LMG 3331 / NBRC 15819 / NCTC 12168 / Alc 37) (Ochrobactrum anthropi).